We begin with the raw amino-acid sequence, 894 residues long: MIQQIDAPLREDVRLLGNLLGETLKQHAGQDLFNQIEQIRALAKGARDGQAETEKKLEQLFLDLKDEEILPLTRAFSYFLNFANIAEQYHVVRSRRRSEFDEQGPPPNPLIHLFEKFKQNQISSKQLFQQVSNLSIELVLTAHPTEVSRRTLIQKYDDINEGLSKLDQQKLTPRERQQVLDDLKQLICSAWQTDEIRQNKPTPLDEAKWGFTTIEQTLWNAVPKFVRELDTLVHQHCDAHLPLDISPIRFASWMGGDRDGNPNVTHNVTQEVLWLSRWQAADLYLRDIEDLRWELSIQACSEELSQTLGRRHPEPYREYLRSTRERLKATRQWLSLRLQGLDGDDSQIIRHKQELLDPLLLCHRSLMECNLPEIANGKLLDFIYRVNCFGIELLKLDIRQESGRHRQAISAITEYLGLGNFESWTEQARQNFLIQELQSKRPLLPKYLNEPEGSLIEHPDVKEVFATMRTLAEQPPESLGAYIISMAEYASDVLAVLLLQKEAGILQPLRVVPLFETLKDLDGAAKTMETLFNMHWYKQHIQGKHEVMIGYSDSAKDAGFMSANWAQYRAQEELTAVAKSHGVQLTLFHGRGGSISRGGAPTQQALFSQPPGSISGAIRVTEQGEMIRFKFGLEGVALQNLEIYTAATLEATLLPPPVPKQEWRDLMHQMTDISVRVYRETVRENPHFVQYLRTVTPELELQMLPLGSRPAKRKVSGGIESLRAIPWVFAWTQIRLMLPAWLGTGAAINQVIDENKKAVLDEMLAEWPYFQTLIDMLEMVLSKSDANIALYYESHLTDNEDLKILGEMLRQRLNDAVQTLLSMKGESKLLSKNDVLDQAMQVRKPYLLPLHLLQAELMKRRRLYTAQSNAERTPVDHALMVSIAGIAAGLRNTG.

Catalysis depends on residues H143 and K556.

The protein belongs to the PEPCase type 1 family. It depends on Mg(2+) as a cofactor.

It catalyses the reaction oxaloacetate + phosphate = phosphoenolpyruvate + hydrogencarbonate. Its function is as follows. Forms oxaloacetate, a four-carbon dicarboxylic acid source for the tricarboxylic acid cycle. In Acinetobacter baylyi (strain ATCC 33305 / BD413 / ADP1), this protein is Phosphoenolpyruvate carboxylase.